The primary structure comprises 171 residues: Odorant-binding protein 1b (171 aa).

A signal peptide spans methionine 1–alanine 19. Disulfide bonds link cysteine 57–cysteine 61 and cysteine 76–cysteine 169.

This sequence belongs to the calycin superfamily. Lipocalin family. May form a heterodimer with OBP1A. In terms of processing, the N-terminus may be blocked. Expressed in nasal mucosa (at protein level). Specifically detected in septal and lateral nasal glands.

Its subcellular location is the secreted. Functionally, binds the chemical odorant 2-isobutyl-3-methoxypyrazine. The chain is Odorant-binding protein 1b from Mus musculus (Mouse).